Here is a 315-residue protein sequence, read N- to C-terminus: Ectopic P granules protein 4 (315 aa).

The next 6 helical transmembrane spans lie at I84 to F104, I113 to F133, L146 to L166, I190 to G210, I221 to S241, and I242 to I262.

Belongs to the EI24 family. In terms of tissue distribution, expressed in pharyngeal and body wall muscles and intestine cells.

The protein resides in the cytoplasm. The protein localises to the membrane. Involved in autophagy. Thought to act in autophagasome and omegasome formation. In Caenorhabditis elegans, this protein is Ectopic P granules protein 4.